Consider the following 221-residue polypeptide: GTP cyclohydrolase III (221 aa).

Belongs to the archaeal-type GTP cyclohydrolase family.

The enzyme catalyses GTP + 3 H2O = 2-amino-5-formylamino-6-(5-phospho-D-ribosylamino)pyrimidin-4(3H)-one + 2 phosphate + 2 H(+). Its function is as follows. Catalyzes the formation of 2-amino-5-formylamino-6-ribofuranosylamino-4(3H)-pyrimidinone ribonucleotide monophosphate and inorganic phosphate from GTP. Also has an independent pyrophosphate phosphohydrolase activity. In Pyrobaculum neutrophilum (strain DSM 2338 / JCM 9278 / NBRC 100436 / V24Sta) (Thermoproteus neutrophilus), this protein is GTP cyclohydrolase III.